The chain runs to 3419 residues: Utrophin (3419 aa).

The actin-binding stretch occupies residues 1 to 246 (MAKYGHLEAS…LPDKKSIIMY (246 aa)). The residue at position 4 (Y4) is a Phosphotyrosine. A Phosphoserine modification is found at S10. Calponin-homology (CH) domains follow at residues 31-135 (DVQK…LHWQ) and 150-255 (TNSE…EVLP). The interaction with SYNM stretch occupies residues 268 to 905 (TLPRKYKKEC…YQQQLENELK (638 aa)). S295 bears the Phosphoserine mark. 17 Spectrin repeats span residues 312–416 (DSYQ…SRLH), 421–525 (ELQK…NRLQ), 532–636 (QELL…NQVT), 690–795 (KKFD…RKIQ), 801–901 (NAYF…QQLE), 910–1012 (PAYL…RSLE), 1019–1121 (RDFK…SRLS), 1128–1229 (MNLK…HTLE), 1236–1333 (VELL…ISLE), 1335–1436 (QLQV…LFQK), 1438–1540 (ANFE…QDLE), 1547–1648 (RKLK…NTLL), 1653–1747 (QLEV…INSA), 1748–1840 (QMLI…KIKA), 1841–1958 (IPQR…SDRR), 1969–2070 (KQFH…PRLK), and 2077–2176 (SGYR…KTRT). Positions 1336 to 1761 (LQVLRETDHM…GQDPAGTVEA (426 aa)) are interaction with SYNM. S1998 is subject to Phosphoserine. S2201 carries the post-translational modification Phosphoserine. 5 Spectrin repeats span residues 2216 to 2319 (ADLD…QQLE), 2336 to 2426 (EELM…SALE), 2433 to 2542 (QTSR…AHLE), 2549 to 2674 (NRLL…KQVG), and 2681 to 2783 (RDLQ…KQLQ). The disordered stretch occupies residues 2616–2640 (DQPIEAPEEPRRNPQSKTELTPEER). The segment at 2785-3152 (AHRDFGPSSQ…TVLEGDNLET (368 aa)) is interaction with SYNM. Residues 2799–2832 (TSVQLPWQRSISHNKVPYYINHQTQTTCWDHPKM) form the WW domain. The ZZ-type; degenerate zinc-finger motif lies at 3052–3108 (KHQAKCNICKECPIVGFRYRSLKHFNYDVCQSCFFSGRTAKGHKLHYPMVEYCIPTT). 4 residues coordinate Zn(2+): C3057, C3060, C3081, and C3084. 2 disordered regions span residues 3277-3296 (RRGL…YHTS) and 3344-3395 (DSDS…TDLT). The residue at position 3284 (S3284) is a Phosphoserine.

In terms of assembly, homodimer. Interacts with the syntrophins SNTA1; SNTB1 and SNTB2. Interacts with SYNM. Interacts (via its WWW and ZZ domains) with DAG1 (via the PPXY motif of betaDAG1); the interaction is inhibited by the tyrosine phosphorylation of the PPXY motif of DAG1. Interacts with DTNB. Interacts with PGM5.

Its subcellular location is the postsynaptic cell membrane. The protein localises to the cytoplasm. It is found in the cytoskeleton. Functionally, may play a role in anchoring the cytoskeleton to the plasma membrane. The sequence is that of Utrophin from Rattus norvegicus (Rat).